The following is a 1293-amino-acid chain: Receptor-type tyrosine-protein phosphatase C (1293 aa).

The signal sequence occupies residues 1–25 (MTMGLWLKLLAFGFALLDTEVFVTG). The Extracellular portion of the chain corresponds to 26 to 566 (QTPTPSDELS…RNESTNFNAK (541 aa)). The interval 43 to 174 (LPQSDPLPAR…STTDISSGAS (132 aa)) is disordered. Composition is skewed to polar residues over residues 53–72 (TTES…SETT), 88–110 (QPDS…QADN), and 149–169 (LARN…TTDI). The N-linked (GlcNAc...) asparagine glycan is linked to N66. 15 N-linked (GlcNAc...) asparagine glycosylation sites follow: N152, N163, N209, N213, N220, N255, N260, N292, N313, N324, N349, N418, N429, N459, and N491. Fibronectin type-III domains are found at residues 376–472 (IPET…TKAD) and 473–568 (RPDK…AKAL). The helical transmembrane segment at 567-588 (ALIIFLVFLIIVTSIALLVVLY) threads the bilayer. The Cytoplasmic portion of the chain corresponds to 589–1293 (KIYDLRKKRS…SASPAPTQSS (705 aa)). Tyrosine-protein phosphatase domains follow at residues 642–901 (FLAE…LVEY) and 933–1216 (LEAE…IASI). Y672 is modified (phosphotyrosine). Residues D810, 842 to 848 (CSAGVGR), and Q886 each bind substrate. Catalysis depends on C842, which acts as the Phosphocysteine intermediate. Residues S964, S983, S986, S990, S993, S994, and S998 each carry the phosphoserine modification. A disordered region spans residues 980–1003 (LEMSKESEPESDESSDDDSDSEET). The segment covering 988–1001 (PESDESSDDDSDSE) has biased composition (acidic residues). Residue C1157 is the Phosphocysteine intermediate of the active site. Phosphoserine is present on S1229. The segment at 1240–1293 (DGGKQDANCVRPDGPLNKAQEDSRGVGTPEPTNSAEEPEHAANGSASPAPTQSS) is disordered. T1267 carries the phosphothreonine modification. Residues 1283-1293 (GSASPAPTQSS) are compositionally biased toward polar residues. A Phosphoserine modification is found at S1286.

The protein belongs to the protein-tyrosine phosphatase family. Receptor class 1/6 subfamily. In terms of assembly, interacts with SKAP1. Interacts with DPP4; the interaction is enhanced in an interleukin-12-dependent manner in activated lymphocytes. Binds GANAB and PRKCSH. Interacts with CD53; this interaction stabilizes PTPRC on the membrane and is required for optimal phosphatase activity. Interacts with CLEC10A. Heavily N- and O-glycosylated.

It localises to the cell membrane. Its subcellular location is the membrane raft. It is found in the synapse. The catalysed reaction is O-phospho-L-tyrosyl-[protein] + H2O = L-tyrosyl-[protein] + phosphate. Functionally, protein tyrosine-protein phosphatase required for T-cell activation through the antigen receptor. Acts as a positive regulator of T-cell coactivation upon binding to DPP4. The first PTPase domain has enzymatic activity, while the second one seems to affect the substrate specificity of the first one. Upon T-cell activation, recruits and dephosphorylates SKAP1 and FYN. Dephosphorylates LYN, and thereby modulates LYN activity. Interacts with CLEC10A at antigen presenting cell-T cell contact; CLEC10A on immature dendritic cells recognizes Tn antigen-carrying PTPRC/CD45 receptor on effector T cells and modulates T cell activation threshold to limit autoreactivity. The sequence is that of Receptor-type tyrosine-protein phosphatase C from Mus musculus (Mouse).